We begin with the raw amino-acid sequence, 1293 residues long: Receptor-type tyrosine-protein phosphatase C (1293 aa).

Residues Met-1–Gly-25 form the signal peptide. The Extracellular portion of the chain corresponds to Gln-26 to Lys-566. Residues Leu-43–Ser-174 are disordered. 3 stretches are compositionally biased toward polar residues: residues Thr-53–Thr-72, Gln-88–Asn-110, and Leu-149–Ile-169. N-linked (GlcNAc...) asparagine glycosylation is present at Asn-66. N-linked (GlcNAc...) asparagine glycosylation is found at Asn-152, Asn-163, Asn-209, Asn-213, Asn-220, Asn-255, Asn-260, Asn-292, Asn-313, Asn-324, Asn-349, Asn-418, Asn-429, Asn-459, and Asn-491. Fibronectin type-III domains lie at Ile-376–Asp-472 and Arg-473–Leu-568. A helical membrane pass occupies residues Ala-567–Tyr-588. At Lys-589–Ser-1293 the chain is on the cytoplasmic side. 2 Tyrosine-protein phosphatase domains span residues Phe-642–Tyr-901 and Leu-933–Ile-1216. Tyr-672 is subject to Phosphotyrosine. Residues Asp-810, Cys-842–Arg-848, and Gln-886 contribute to the substrate site. Cys-842 serves as the catalytic Phosphocysteine intermediate. Phosphoserine occurs at positions 964, 983, 986, 990, 993, 994, and 998. The tract at residues Leu-980 to Thr-1003 is disordered. A compositionally biased stretch (acidic residues) spans Pro-988 to Glu-1001. Cys-1157 acts as the Phosphocysteine intermediate in catalysis. Ser-1229 is subject to Phosphoserine. Residues Asp-1240–Ser-1293 are disordered. Thr-1267 carries the phosphothreonine modification. Over residues Gly-1283–Ser-1293 the composition is skewed to polar residues. Residue Ser-1286 is modified to Phosphoserine.

It belongs to the protein-tyrosine phosphatase family. Receptor class 1/6 subfamily. As to quaternary structure, interacts with SKAP1. Interacts with DPP4; the interaction is enhanced in an interleukin-12-dependent manner in activated lymphocytes. Binds GANAB and PRKCSH. Interacts with CD53; this interaction stabilizes PTPRC on the membrane and is required for optimal phosphatase activity. Interacts with CLEC10A. In terms of processing, heavily N- and O-glycosylated.

Its subcellular location is the cell membrane. It localises to the membrane raft. It is found in the synapse. The catalysed reaction is O-phospho-L-tyrosyl-[protein] + H2O = L-tyrosyl-[protein] + phosphate. In terms of biological role, protein tyrosine-protein phosphatase required for T-cell activation through the antigen receptor. Acts as a positive regulator of T-cell coactivation upon binding to DPP4. The first PTPase domain has enzymatic activity, while the second one seems to affect the substrate specificity of the first one. Upon T-cell activation, recruits and dephosphorylates SKAP1 and FYN. Dephosphorylates LYN, and thereby modulates LYN activity. Interacts with CLEC10A at antigen presenting cell-T cell contact; CLEC10A on immature dendritic cells recognizes Tn antigen-carrying PTPRC/CD45 receptor on effector T cells and modulates T cell activation threshold to limit autoreactivity. In Mus musculus (Mouse), this protein is Receptor-type tyrosine-protein phosphatase C.